The chain runs to 227 residues: Cytochrome c oxidase subunit 2 (227 aa).

Topologically, residues 1 to 14 (MAYPFQLGLQDATS) are mitochondrial intermembrane. Residues 15-45 (PIMEELLHFHDHTLMIVFLISSLVLYIISSM) traverse the membrane as a helical segment. Residues 46-59 (LTTKLTHTSTMDAQ) are Mitochondrial matrix-facing. The chain crosses the membrane as a helical span at residues 60–87 (EVETVWTILPAIILVLIALPSLRILYMM). At 88–227 (DETNNPSLTV…YFETWSALMV (140 aa)) the chain is on the mitochondrial intermembrane side. Cu cation is bound by residues histidine 161, cysteine 196, glutamate 198, cysteine 200, histidine 204, and methionine 207. Glutamate 198 is a Mg(2+) binding site. Tyrosine 218 carries the phosphotyrosine modification.

Belongs to the cytochrome c oxidase subunit 2 family. As to quaternary structure, component of the cytochrome c oxidase (complex IV, CIV), a multisubunit enzyme composed of 14 subunits. The complex is composed of a catalytic core of 3 subunits MT-CO1, MT-CO2 and MT-CO3, encoded in the mitochondrial DNA, and 11 supernumerary subunits COX4I, COX5A, COX5B, COX6A, COX6B, COX6C, COX7A, COX7B, COX7C, COX8 and NDUFA4, which are encoded in the nuclear genome. The complex exists as a monomer or a dimer and forms supercomplexes (SCs) in the inner mitochondrial membrane with NADH-ubiquinone oxidoreductase (complex I, CI) and ubiquinol-cytochrome c oxidoreductase (cytochrome b-c1 complex, complex III, CIII), resulting in different assemblies (supercomplex SCI(1)III(2)IV(1) and megacomplex MCI(2)III(2)IV(2)). Found in a complex with TMEM177, COA6, COX18, COX20, SCO1 and SCO2. Interacts with TMEM177 in a COX20-dependent manner. Interacts with COX20. Interacts with COX16. Cu cation serves as cofactor.

The protein resides in the mitochondrion inner membrane. The enzyme catalyses 4 Fe(II)-[cytochrome c] + O2 + 8 H(+)(in) = 4 Fe(III)-[cytochrome c] + 2 H2O + 4 H(+)(out). Component of the cytochrome c oxidase, the last enzyme in the mitochondrial electron transport chain which drives oxidative phosphorylation. The respiratory chain contains 3 multisubunit complexes succinate dehydrogenase (complex II, CII), ubiquinol-cytochrome c oxidoreductase (cytochrome b-c1 complex, complex III, CIII) and cytochrome c oxidase (complex IV, CIV), that cooperate to transfer electrons derived from NADH and succinate to molecular oxygen, creating an electrochemical gradient over the inner membrane that drives transmembrane transport and the ATP synthase. Cytochrome c oxidase is the component of the respiratory chain that catalyzes the reduction of oxygen to water. Electrons originating from reduced cytochrome c in the intermembrane space (IMS) are transferred via the dinuclear copper A center (CU(A)) of subunit 2 and heme A of subunit 1 to the active site in subunit 1, a binuclear center (BNC) formed by heme A3 and copper B (CU(B)). The BNC reduces molecular oxygen to 2 water molecules using 4 electrons from cytochrome c in the IMS and 4 protons from the mitochondrial matrix. The sequence is that of Cytochrome c oxidase subunit 2 (MT-CO2) from Chrysocyon brachyurus (Maned wolf).